The primary structure comprises 60 residues: Large ribosomal subunit protein bL32 (60 aa).

The interval 1-21 is disordered; that stretch reads MAVPARHTSKAKKNKRRTHYK. The segment covering 7–20 has biased composition (basic residues); the sequence is HTSKAKKNKRRTHY.

The protein belongs to the bacterial ribosomal protein bL32 family.

In Streptococcus equi subsp. zooepidemicus (strain H70), this protein is Large ribosomal subunit protein bL32.